The primary structure comprises 341 residues: Phosphoribosylformylglycinamidine cyclo-ligase (341 aa).

This sequence belongs to the AIR synthase family.

It localises to the cytoplasm. The catalysed reaction is 2-formamido-N(1)-(5-O-phospho-beta-D-ribosyl)acetamidine + ATP = 5-amino-1-(5-phospho-beta-D-ribosyl)imidazole + ADP + phosphate + H(+). It participates in purine metabolism; IMP biosynthesis via de novo pathway; 5-amino-1-(5-phospho-D-ribosyl)imidazole from N(2)-formyl-N(1)-(5-phospho-D-ribosyl)glycinamide: step 2/2. The sequence is that of Phosphoribosylformylglycinamidine cyclo-ligase from Lachnoclostridium phytofermentans (strain ATCC 700394 / DSM 18823 / ISDg) (Clostridium phytofermentans).